Here is a 92-residue protein sequence, read N- to C-terminus: MAHKKAGGSTRNGRDSNPKYLGVKRFGGQFVNAGEIIVRQRGTRFHPGPGVGCGRDHTLYALVEGLVQFTTKGEKNRKYVTILPEQREEAAS.

The segment at 1–20 (MAHKKAGGSTRNGRDSNPKY) is disordered.

This sequence belongs to the bacterial ribosomal protein bL27 family.

This chain is Large ribosomal subunit protein bL27, found in Legionella pneumophila (strain Paris).